We begin with the raw amino-acid sequence, 683 residues long: Heat shock protein homolog ECU03_0520 (683 aa).

It belongs to the heat shock protein 70 family.

The protein localises to the cytoplasm. The protein is Heat shock protein homolog ECU03_0520 of Encephalitozoon cuniculi (strain GB-M1) (Microsporidian parasite).